The following is a 350-amino-acid chain: D-guloside 3-dehydrogenase (350 aa).

This sequence belongs to the zinc-containing alcohol dehydrogenase family. Requires Zn(2+) as cofactor.

The enzyme catalyses a D-guloside + NAD(+) = a 3-dehydro-D-guloside + NADH + H(+). Catalyzes the NAD(+)-dependent oxidation of the hydroxyl group at C3 of D-gulosides leading to 3-dehydro-D-gulosides. Probably functions in a metabolic pathway that transforms D-gulosides to D-glucosides. Is also able to catalyze the reverse reactions, i.e. the NADH-dependent reduction of the oxo group at C3 of 3-dehydro-D-gulosides leading to D-gulosides. In vitro, can oxidize D-gulose and methyl beta-D-guloside, and reduce methyl alpha-3-dehydro-D-guloside and methyl beta-3-dehydro-D-guloside. However, the actual specific physiological substrates for this metabolic pathway are unknown. The chain is D-guloside 3-dehydrogenase (ycjQ) from Shigella flexneri.